The chain runs to 711 residues: Putative DNA topoisomerase 3 (711 aa).

Residues 2 to 135 form the Toprim domain; it reads KYLILAEKPS…LRRLWISSVT (134 aa). Positions 8 and 104 each coordinate Mg(2+). A Topo IA-type catalytic domain is found at 152–580; that stretch reads YNDLYYAALA…EMKGFTKDVV (429 aa). Positions 186–191 are interaction with DNA; that stretch reads SLGRVQ. Residue Y305 is the O-(5'-phospho-DNA)-tyrosine intermediate of the active site. Residues 691 to 711 form a disordered region; the sequence is MNKNEGLDNNPFKDALKNLNL.

The protein belongs to the type IA topoisomerase family. Mg(2+) is required as a cofactor.

The enzyme catalyses ATP-independent breakage of single-stranded DNA, followed by passage and rejoining.. In terms of biological role, releases the supercoiling and torsional tension of DNA, which is introduced during the DNA replication and transcription, by transiently cleaving and rejoining one strand of the DNA duplex. Introduces a single-strand break via transesterification at a target site in duplex DNA. The scissile phosphodiester is attacked by the catalytic tyrosine of the enzyme, resulting in the formation of a DNA-(5'-phosphotyrosyl)-enzyme intermediate and the expulsion of a 3'-OH DNA strand. The free DNA strand then undergoes passage around the unbroken strand, thus removing DNA supercoils. Finally, in the religation step, the DNA 3'-OH attacks the covalent intermediate to expel the active-site tyrosine and restore the DNA phosphodiester backbone. The protein is Putative DNA topoisomerase 3 of Staphylococcus aureus (strain bovine RF122 / ET3-1).